Here is a 164-residue protein sequence, read N- to C-terminus: Diphosphoinositol polyphosphate phosphohydrolase 3-alpha (164 aa).

Residues arginine 9, 17-19, and 38-40 contribute to the substrate site; these read KKR and SSR. One can recognise a Nudix hydrolase domain in the interval 17-144; it reads KKRAACLCFR…VHAEYLEKLK (128 aa). The Mg(2+) site is built by glycine 49 and glutamate 65. A Nudix box motif is present at residues 50–71; that stretch reads GGMEPEEEPGGAAVREVYEEAG. The active-site Proton acceptor is glutamate 68. Glutamate 69 is a binding site for Mg(2+). Substrate is bound by residues 89 to 91, arginine 115, and lysine 133; that span reads PKH. The interval 144–164 is disordered; that stretch reads KLGGSPTNGNSMAPSSPDSDP. The segment covering 148 to 164 has biased composition (polar residues); sequence SPTNGNSMAPSSPDSDP.

It belongs to the Nudix hydrolase family. DIPP subfamily. It depends on Mg(2+) as a cofactor. Requires Mn(2+) as cofactor. Mainly expressed in testis and, at lower level in brain. According to PubMed:12121577, it is widely expressed.

The protein resides in the cytoplasm. The catalysed reaction is diphospho-myo-inositol polyphosphate + H2O = myo-inositol polyphosphate + phosphate.. It catalyses the reaction P(1),P(6)-bis(5'-adenosyl) hexaphosphate + H2O = adenosine 5'-pentaphosphate + AMP + 2 H(+). It carries out the reaction P(1),P(5)-bis(5'-adenosyl) pentaphosphate + H2O = adenosine 5'-tetraphosphate + AMP + 2 H(+). Functionally, cleaves a beta-phosphate from the diphosphate groups in PP-InsP5 (diphosphoinositol pentakisphosphate), suggesting that it may play a role in signal transduction. Also able to catalyze the hydrolysis of dinucleoside oligophosphates, with Ap6A and Ap5A being the preferred substrates. The major reaction products are ADP and p4a from Ap6A and ADP and ATP from Ap5A. Also able to hydrolyze 5-phosphoribose 1-diphosphate. This Homo sapiens (Human) protein is Diphosphoinositol polyphosphate phosphohydrolase 3-alpha (NUDT10).